The primary structure comprises 109 residues: uncharacterized protein (109 aa).

The tract at residues 63–109 (DPSTWEPEEHETEHCRGHTLPEKKQKPQGGHGSDKDEDKGNCGCDHC) is disordered. 2 stretches are compositionally biased toward basic and acidic residues: residues 73 to 87 (ETEHCRGHTLPEKKQ) and 94 to 109 (GSDKDEDKGNCGCDHC).

This is an uncharacterized protein from Caenorhabditis elegans.